The primary structure comprises 939 residues: cGMP-dependent 3',5'-cyclic phosphodiesterase (939 aa).

Residue Gly-2 is the site of N-myristoyl glycine attachment. 2 S-palmitoyl cysteine lipidation sites follow: Cys-5 and Cys-11. Positions 16–38 (YPAARPAEPRGQQVFLKPDEPPP) are disordered. A Phosphoserine modification is found at Ser-116. The segment at 197-217 (PEAVQNTSVDASEDQKDEKGY) is disordered. GAF domains follow at residues 236–373 (ATSL…HYTG) and 408–547 (DVSV…GISI). The 3',5'-cyclic GMP site is built by Ser-430, Asp-445, Ile-464, Tyr-487, and Thr-498. A PDEase domain is found at 577 to 901 (SDDEYTKLLH…EHWTKVSHKF (325 aa)). His-655 serves as the catalytic Proton donor. His-659, His-695, Asp-696, and Asp-807 together coordinate Zn(2+). Asp-696 provides a ligand contact to Mg(2+).

It belongs to the cyclic nucleotide phosphodiesterase family. PDE2 subfamily. In terms of assembly, homodimer. Requires Zn(2+) as cofactor. Mg(2+) serves as cofactor. In terms of tissue distribution, expressed in brain and liver (at protein level).

It is found in the cytoplasm. The protein resides in the mitochondrion matrix. It localises to the mitochondrion inner membrane. The protein localises to the mitochondrion outer membrane. Its subcellular location is the cell membrane. The catalysed reaction is a nucleoside 3',5'-cyclic phosphate + H2O = a nucleoside 5'-phosphate + H(+). It catalyses the reaction 3',5'-cyclic GMP + H2O = GMP + H(+). It carries out the reaction 3',5'-cyclic AMP + H2O = AMP + H(+). With respect to regulation, the 3',5'-cyclic-AMP phosphodiesterase activity is stimulated by 3',5'-cyclic GMP. Specifically inhibited by Bay 60-7550. In terms of biological role, cGMP-activated cyclic nucleotide phosphodiesterase with a dual-specificity for the second messengers cAMP and cGMP, which are key regulators of many important physiological processes. Has a higher efficiency with cGMP compared to cAMP. Plays a role in cell growth and migration. Regulates mitochondrial cAMP levels and respiration. Involved in the regulation of mitochondria morphology/dynamics and apoptotic cell death via local modulation of cAMP/PKA signaling in the mitochondrion, including the monitoring of local cAMP levels at the outer mitochondrial membrane and of PKA-dependent phosphorylation of DNM1L. This is cGMP-dependent 3',5'-cyclic phosphodiesterase from Mus musculus (Mouse).